A 261-amino-acid chain; its full sequence is Pantothenate synthetase (261 aa).

29-36 (MGALHNGH) is a binding site for ATP. His36 serves as the catalytic Proton donor. Gln60 contacts (R)-pantoate. Residue Gln60 participates in beta-alanine binding. 147-150 (GEKD) is a binding site for ATP. Gln153 provides a ligand contact to (R)-pantoate. Position 184-187 (184-187 (LSSR)) interacts with ATP.

This sequence belongs to the pantothenate synthetase family. As to quaternary structure, homodimer.

The protein resides in the cytoplasm. The enzyme catalyses (R)-pantoate + beta-alanine + ATP = (R)-pantothenate + AMP + diphosphate + H(+). It participates in cofactor biosynthesis; (R)-pantothenate biosynthesis; (R)-pantothenate from (R)-pantoate and beta-alanine: step 1/1. In terms of biological role, catalyzes the condensation of pantoate with beta-alanine in an ATP-dependent reaction via a pantoyl-adenylate intermediate. This Francisella tularensis subsp. mediasiatica (strain FSC147) protein is Pantothenate synthetase.